Here is a 405-residue protein sequence, read N- to C-terminus: Acetate kinase (405 aa).

Residue asparagine 7 participates in Mg(2+) binding. Lysine 14 provides a ligand contact to ATP. A substrate-binding site is contributed by arginine 91. The Proton donor/acceptor role is filled by aspartate 148. ATP is bound by residues 208–212 (HLGNG) and 283–285 (DFR). A Mg(2+)-binding site is contributed by glutamate 384.

The protein belongs to the acetokinase family. Homodimer. It depends on Mg(2+) as a cofactor. The cofactor is Mn(2+).

Its subcellular location is the cytoplasm. The enzyme catalyses acetate + ATP = acetyl phosphate + ADP. It participates in metabolic intermediate biosynthesis; acetyl-CoA biosynthesis; acetyl-CoA from acetate: step 1/2. Catalyzes the formation of acetyl phosphate from acetate and ATP. Can also catalyze the reverse reaction. The protein is Acetate kinase of Dictyoglomus turgidum (strain DSM 6724 / Z-1310).